We begin with the raw amino-acid sequence, 337 residues long: Low-density lipoprotein receptor class A domain-containing protein 3 (337 aa).

Positions 1–13 (MWLLYLILGSVES) are cleaved as a signal peptide. The Extracellular portion of the chain corresponds to 14–169 (QLLPGNNHTT…NQLLYYPSIT (156 aa)). A glycan (N-linked (GlcNAc...) asparagine) is linked at Asn20. LDL-receptor class A domains are found at residues 24 to 61 (ECNIPGNFMCSNGRCIPGGWQCDGNPDCFDESDEKECP), 66 to 103 (RCGPNFFPCTSGIHCIIARFQCNGFEDCPDGSDEENCT), and 108 to 144 (LCSNSRFHCKNHLCIDKSFVCDGQNNCLDNSDEEHCH). Intrachain disulfides connect Cys25/Cys38, Cys33/Cys51, Cys45/Cys60, Cys67/Cys80, Cys74/Cys93, Cys87/Cys102, Cys109/Cys121, Cys116/Cys134, and Cys128/Cys143. The N-linked (GlcNAc...) asparagine glycan is linked to Asn101. A helical membrane pass occupies residues 170 to 190 (YTIIGSSVIFVLVVALLALVL). Over 191 to 337 (HHQRKRNLMS…DDLPSTEVDV (147 aa)) the chain is Cytoplasmic. A compositionally biased stretch (polar residues) spans 243 to 253 (QQPVSVESPPS). Residues 243-337 (QQPVSVESPP…DDLPSTEVDV (95 aa)) form a disordered region. Residues 291-303 (RSRTGSSASAGST) are compositionally biased toward low complexity.

This sequence belongs to the LDLR family.

Its subcellular location is the cell membrane. The polypeptide is Low-density lipoprotein receptor class A domain-containing protein 3 (Xenopus tropicalis (Western clawed frog)).